Consider the following 544-residue polypeptide: Methionine--tRNA ligase (544 aa).

The 'HIGH' region motif lies at 10–20; the sequence is PYANGSLHLGH. Zn(2+)-binding residues include C141, C144, C153, and C156. A 'KMSKS' region motif is present at residues 329–333; that stretch reads KLSTS. Position 332 (T332) interacts with ATP.

The protein belongs to the class-I aminoacyl-tRNA synthetase family. MetG type 1 subfamily. Monomer. Zn(2+) serves as cofactor.

Its subcellular location is the cytoplasm. The enzyme catalyses tRNA(Met) + L-methionine + ATP = L-methionyl-tRNA(Met) + AMP + diphosphate. Its function is as follows. Is required not only for elongation of protein synthesis but also for the initiation of all mRNA translation through initiator tRNA(fMet) aminoacylation. The chain is Methionine--tRNA ligase from Bacillus cereus (strain Q1).